The sequence spans 456 residues: MKIEEVKSTVRTQRIAAHSHVKGLGLDEAGSALQSAAGLVGQKAAREAAGIVVDLIKSKKMAGRALLLAGPPGTGKTAIALAIAQELGNKVPFCPMVGSEVFSNEIKKTEVLMENFRRSIGLRIRETKEVYEGEVTELTPVETENPMGGYGKTISNVVIGLKTAKGTKQLKLDPSIFDALQKEKVEVGDVIYIEANSGAVKRQGRSDTFATEFDLETEEYVPLPKGDVHKKKEVIQDVTLHDLDVANARPQGGQDVLSMVGQLMKPKKTEITDKLRMEINKVVNKYIDQGIAELVPGVLFIDEIHMLDLETFTYLHKSLESPIAPIVIFATNRGRCVIRGTTDIVSPHGIPLDLLDRLLIIRTLLYSTSDMEQIIKLRAQTEGLQLEDPAFARLSEIGTSSTLRYAVQLLTPAHQMCKVNGRTQITKDDIEDVHSLFLDAKRSSKHLSEKNNKFML.

70–77 (GPPGTGKT) is a binding site for ATP.

This sequence belongs to the RuvB family. Forms homohexameric rings. May form a dodecamer with rept made of two stacked hexameric rings. Component of the chromatin remodeling Ino80 complex.

The protein resides in the nucleus. It carries out the reaction ATP + H2O = ADP + phosphate + H(+). In terms of biological role, acts as a transcriptional coactivator in Wg signaling caused by altered arm signaling. Pont and rept interfere antagonistically with nuclear arm signaling function, and are required to enhance or reduce arm activity, respectively. Also an essential cofactor for the normal function of Myc; required for cellular proliferation and growth. Its function is as follows. Proposed core component of the chromatin remodeling Ino80 complex which is involved in transcriptional regulation, DNA replication and probably DNA repair. The chain is RuvB-like helicase 1 from Drosophila pseudoobscura pseudoobscura (Fruit fly).